The primary structure comprises 162 residues: Endoribonuclease YbeY (162 aa).

Positions 117, 121, and 127 each coordinate Zn(2+).

The protein belongs to the endoribonuclease YbeY family. Zn(2+) is required as a cofactor.

It localises to the cytoplasm. Its function is as follows. Single strand-specific metallo-endoribonuclease involved in late-stage 70S ribosome quality control and in maturation of the 3' terminus of the 16S rRNA. The polypeptide is Endoribonuclease YbeY (Francisella tularensis subsp. mediasiatica (strain FSC147)).